A 226-amino-acid polypeptide reads, in one-letter code: UPF0758 protein gbs1168 (226 aa).

The MPN domain occupies 103–225; it reads QILSSEQLAR…YYSFREEADI (123 aa). Residues His-174, His-176, and Asp-187 each contribute to the Zn(2+) site. The short motif at 174–187 is the JAMM motif element; the sequence is HNHPSGSPNPSESD.

The protein belongs to the UPF0758 family.

The sequence is that of UPF0758 protein gbs1168 from Streptococcus agalactiae serotype III (strain NEM316).